A 51-amino-acid chain; its full sequence is Large ribosomal subunit protein bL33 (51 aa).

Belongs to the bacterial ribosomal protein bL33 family.

This chain is Large ribosomal subunit protein bL33, found in Francisella philomiragia subsp. philomiragia (strain ATCC 25017 / CCUG 19701 / FSC 153 / O#319-036).